Reading from the N-terminus, the 24-residue chain is EDGYLLNRDTGCKVSCGTCRYCND.

Residues 1–24 (EDGYLLNRDTGCKVSCGTCRYCND) enclose the LCN-type CS-alpha/beta domain.

The protein belongs to the long (4 C-C) scorpion toxin superfamily. Sodium channel inhibitor family. Alpha subfamily. In terms of tissue distribution, expressed by the venom gland.

The protein localises to the secreted. Functionally, binds to sodium channels (Nav) and inhibits the inactivation of the activated channels, thereby blocking neuronal transmission. This toxin is active against mammals. In Hottentotta tamulus (Eastern Indian scorpion), this protein is Neurotoxin-2.